We begin with the raw amino-acid sequence, 645 residues long: 1,4-alpha-glucan branching enzyme GlgB (645 aa).

Catalysis depends on D309, which acts as the Nucleophile. The active-site Proton donor is E352. The disordered stretch occupies residues 619 to 645 (VKTRKGSKKQDGSKTKVRSNVTSRGKR). Residues 636-645 (RSNVTSRGKR) show a composition bias toward polar residues.

This sequence belongs to the glycosyl hydrolase 13 family. GlgB subfamily. As to quaternary structure, monomer.

It carries out the reaction Transfers a segment of a (1-&gt;4)-alpha-D-glucan chain to a primary hydroxy group in a similar glucan chain.. Its pathway is glycan biosynthesis; glycogen biosynthesis. Its function is as follows. Catalyzes the formation of the alpha-1,6-glucosidic linkages in glycogen by scission of a 1,4-alpha-linked oligosaccharide from growing alpha-1,4-glucan chains and the subsequent attachment of the oligosaccharide to the alpha-1,6 position. The protein is 1,4-alpha-glucan branching enzyme GlgB of Bacillus cereus (strain 03BB102).